A 300-amino-acid polypeptide reads, in one-letter code: Protease HtpX (300 aa).

2 consecutive transmembrane segments (helical) span residues 4–24 and 40–60; these read ILLFLATNLAVVLVASITLRL and SLLIFCFVIGMAGSLVSLFIS. His145 contacts Zn(2+). Residue Glu146 is part of the active site. Zn(2+) is bound at residue His149. A run of 2 helical transmembrane segments spans residues 153 to 173 and 193 to 213; these read GDMVTLALIQGVLNTFVMFFA and LGFFGYMAVVIVAEIVFGLVA. Glu225 contributes to the Zn(2+) binding site.

It belongs to the peptidase M48B family. The cofactor is Zn(2+).

Its subcellular location is the cell inner membrane. The polypeptide is Protease HtpX (Chromohalobacter salexigens (strain ATCC BAA-138 / DSM 3043 / CIP 106854 / NCIMB 13768 / 1H11)).